We begin with the raw amino-acid sequence, 605 residues long: NADH-ubiquinone oxidoreductase chain 5 (605 aa).

Transmembrane regions (helical) follow at residues 8–28, 34–54, 87–107, 117–137, 140–160, 171–191, 241–261, 273–293, 301–321, 324–344, 366–386, 409–429, 457–477, 482–502, and 584–604; these read TLLS…YPYT, IYVK…TMIF, MILM…SMWY, FFKY…ANNL, LFIG…WWYG, AILY…WFLF, TPVS…FLLI, IQTM…ICAL, IVAF…GINQ, LAFL…LCSG, LPFT…MPFL, LFIT…IIYF, LLVG…PTTI, MPTY…IVAL, and IKLY…MLNF.

The protein belongs to the complex I subunit 5 family. Core subunit of respiratory chain NADH dehydrogenase (Complex I) which is composed of 45 different subunits.

Its subcellular location is the mitochondrion inner membrane. The enzyme catalyses a ubiquinone + NADH + 5 H(+)(in) = a ubiquinol + NAD(+) + 4 H(+)(out). Functionally, core subunit of the mitochondrial membrane respiratory chain NADH dehydrogenase (Complex I) which catalyzes electron transfer from NADH through the respiratory chain, using ubiquinone as an electron acceptor. Essential for the catalytic activity and assembly of complex I. This Rousettus amplexicaudatus (Common rousette) protein is NADH-ubiquinone oxidoreductase chain 5 (MT-ND5).